Consider the following 327-residue polypeptide: Undecaprenyl-phosphate 4-deoxy-4-formamido-L-arabinose transferase (327 aa).

Topologically, residues 1–235 (MFDAAPIKKV…TCLTTTPLRL (235 aa)) are cytoplasmic. The chain crosses the membrane as a helical span at residues 236-256 (LSLLGSVIAIGGFSLSVLLIV). Residues 257–269 (LRLALGPQWAAEG) lie on the Periplasmic side of the membrane. Residues 270-290 (VFMLFAVLFTFIGAQFIGMGL) traverse the membrane as a helical segment. Topologically, residues 291-327 (LGEYIGRIYNDVRARPRYFVQQVIYPESTPFTEESHQ) are cytoplasmic.

This sequence belongs to the glycosyltransferase 2 family.

The protein resides in the cell inner membrane. It catalyses the reaction UDP-4-deoxy-4-formamido-beta-L-arabinose + di-trans,octa-cis-undecaprenyl phosphate = 4-deoxy-4-formamido-alpha-L-arabinopyranosyl di-trans,octa-cis-undecaprenyl phosphate + UDP. It participates in glycolipid biosynthesis; 4-amino-4-deoxy-alpha-L-arabinose undecaprenyl phosphate biosynthesis; 4-amino-4-deoxy-alpha-L-arabinose undecaprenyl phosphate from UDP-4-deoxy-4-formamido-beta-L-arabinose and undecaprenyl phosphate: step 1/2. It functions in the pathway bacterial outer membrane biogenesis; lipopolysaccharide biosynthesis. Functionally, catalyzes the transfer of 4-deoxy-4-formamido-L-arabinose from UDP to undecaprenyl phosphate. The modified arabinose is attached to lipid A and is required for resistance to polymyxin and cationic antimicrobial peptides. This chain is Undecaprenyl-phosphate 4-deoxy-4-formamido-L-arabinose transferase, found in Salmonella choleraesuis (strain SC-B67).